A 575-amino-acid polypeptide reads, in one-letter code: Hemagglutinin-neuraminidase (575 aa).

Residues 1–34 (MAEKGKTNSSYWSTTRNDNSTVNTYIDTPAGKTH) are Intravirion-facing. A helical membrane pass occupies residues 35–55 (IWLLIATTMHTILSFIIMILC). Topologically, residues 56–575 (IDLIIKQDTC…SIPKICKITS (520 aa)) are virion surface. The N-linked (GlcNAc...) asparagine; by host glycan is linked to Asn77. Cystine bridges form between Cys192–Cys216, Cys258–Cys271, Cys357–Cys469, and Cys463–Cys473. Residues 254-259 (NRKSCS) are involved in neuraminidase activity. Asn499 and Asn511 each carry an N-linked (GlcNAc...) asparagine; by host glycan. A disulfide bridge links Cys535 with Cys544.

This sequence belongs to the paramyxoviruses hemagglutinin-neuraminidase family. Homotetramer; composed of disulfide-linked homodimers. Interacts with F protein trimer.

The protein localises to the virion membrane. Its subcellular location is the host cell membrane. It carries out the reaction Hydrolysis of alpha-(2-&gt;3)-, alpha-(2-&gt;6)-, alpha-(2-&gt;8)- glycosidic linkages of terminal sialic acid residues in oligosaccharides, glycoproteins, glycolipids, colominic acid and synthetic substrates.. Functionally, attaches the virus to sialic acid-containing cell receptors and thereby initiating infection. Binding of HN protein to the receptor induces a conformational change that allows the F protein to trigger virion/cell membranes fusion. In terms of biological role, neuraminidase activity ensures the efficient spread of the virus by dissociating the mature virions from the neuraminic acid containing glycoproteins. This is Hemagglutinin-neuraminidase (HN) from Human parainfluenza 1 virus (strain Washington/1957) (HPIV-1).